A 510-amino-acid chain; its full sequence is MVDFAEHRKALLCNDAQSIADYESAMGEAVKAVSAWLQNEKMYTGGSIKELRSAISFQPSKEGMGVQQSLQRMIELFLNKSLKVHHPHSLAHLHCPTMVMSQIAEVLINATNQSMDSWDQSPAGSLMEVQLIDWLRQKVGYGSGQAGVFTSGGTQSNLMGVLLARDWCIAKNWKDENGNPWSVQRDGIPAEAMKNVKVICSENAHFSVQKNMAMMGMGFQSVVTVPVNENAQMDVDALEKTMAHLQAEGKVVACVVATAGTTDAGAIHPLKKIREITNKYGSWMHIDAAWGGALILSNTYRAMLDGIELSDSITLDFHKHYFQSISCGAFLLKDEANYRFMHYEAEYLNSAYDEEHGVPNLVSKSLQTTRRFDALKLWMTIESLGEELYGSMIDHGVKLTREVADYIKATEGLELLVEPQFASVLFRVVPEGYPVEFIDSLNQNVADELFARGEANIGVTKVGNVQSLKMTTLSPVVTVDNVKNLLAQVLAEAERIKDAIASGNYVPPID.

K319 is subject to N6-(pyridoxal phosphate)lysine.

The protein belongs to the group II decarboxylase family. The cofactor is pyridoxal 5'-phosphate.

It catalyses the reaction L-2,4-diaminobutanoate + H(+) = propane-1,3-diamine + CO2. The protein operates within amine and polyamine biosynthesis; 1,3-diaminopropane biosynthesis; 1,3-diaminopropane from L-aspartate 4-semialdehyde: step 2/2. The polypeptide is L-2,4-diaminobutyrate decarboxylase (ddc) (Acinetobacter baumannii).